Here is a 481-residue protein sequence, read N- to C-terminus: Probable squalene synthase (481 aa).

Transmembrane regions (helical) follow at residues 294–314 (SVFNFVAIPQAMAIATLELVF) and 416–436 (FLVLSMIGVLFVMGGLMIGAA).

Belongs to the phytoene/squalene synthase family. Mg(2+) serves as cofactor.

The protein resides in the endoplasmic reticulum membrane. It carries out the reaction 2 (2E,6E)-farnesyl diphosphate + NADPH + H(+) = squalene + 2 diphosphate + NADP(+). The catalysed reaction is 2 (2E,6E)-farnesyl diphosphate + NADH + H(+) = squalene + 2 diphosphate + NAD(+). It functions in the pathway terpene metabolism; lanosterol biosynthesis; lanosterol from farnesyl diphosphate: step 1/3. Its function is as follows. Catalyzes the condensation of 2 two farnesyl pyrophosphate moieties to form squalene. It is the first committed enzyme of the sterol biosynthesis pathway. Required for the biosynthesis of ergosterol. This chain is Probable squalene synthase (erg-6), found in Neurospora crassa (strain ATCC 24698 / 74-OR23-1A / CBS 708.71 / DSM 1257 / FGSC 987).